Reading from the N-terminus, the 76-residue chain is Protein sigN132 (76 aa).

Positions 1–13 are enriched in polar residues; the sequence is MLFESISTLSNLK. A disordered region spans residues 1 to 33; sequence MLFESISTLSNLKSASKSSMIASTGSTSSKSSN. Positions 14 to 33 are enriched in low complexity; that stretch reads SASKSSMIASTGSTSSKSSN.

The sequence is that of Protein sigN132 from Dictyostelium discoideum (Social amoeba).